The following is a 107-amino-acid chain: Thioredoxin (107 aa).

The Thioredoxin domain maps to 2-107 (SATPQVSDAS…TLASTLEKYL (106 aa)). Cysteines 32 and 35 form a disulfide.

The protein belongs to the thioredoxin family.

Its function is as follows. Component of the thioredoxin-thioredoxin reductase system. Participates in various redox reactions through the reversible oxidation of its active center dithiol to a disulfide and catalyzes dithiol-disulfide exchange reactions. This is Thioredoxin (trxA) from Synechocystis sp. (strain ATCC 27184 / PCC 6803 / Kazusa).